Consider the following 645-residue polypeptide: Synaptotagmin-16 (645 aa).

3 disordered regions span residues Ala102 to Ser121, Glu144 to Glu192, and Gln206 to Val344. Over residues Glu167–Ser177 the composition is skewed to polar residues. Residues Gly179–Glu192 show a composition bias toward acidic residues. The span at His287–Gly303 shows a compositional bias: polar residues. The C2 1 domain maps to Lys350–Leu469. The segment at Ser478–His503 is disordered. Low complexity predominate over residues Ser485–Ser502. The C2 2 domain occupies Gly505 to His640.

The protein belongs to the synaptotagmin family. As to quaternary structure, homodimer. Can also form heterodimers. In terms of tissue distribution, expressed in brain.

May be involved in the trafficking and exocytosis of secretory vesicles in non-neuronal tissues. Is Ca(2+)-independent. In Homo sapiens (Human), this protein is Synaptotagmin-16 (SYT16).